A 321-amino-acid chain; its full sequence is Torsin-2A (321 aa).

Positions 1-27 (MAVARHGCPPWGSILGLLVLALAAAAA) are cleaved as a signal peptide. 93–100 (GWTGTGKS) is an ATP binding site. A glycan (N-linked (GlcNAc...) asparagine) is linked at asparagine 149.

This sequence belongs to the ClpA/ClpB family. Torsin subfamily. Homohexamer. Interacts with TOR1AIP1.

The protein resides in the endoplasmic reticulum lumen. The chain is Torsin-2A (Tor2a) from Rattus norvegicus (Rat).